Here is a 442-residue protein sequence, read N- to C-terminus: Elongation factor 1-alpha 1 (442 aa).

The region spanning 5 to 227 (KEHLNLVVIG…AALDSFKIPK (223 aa)) is the tr-type G domain. A G1 region spans residues 14 to 21 (GHVDSGKS). 14-21 (GHVDSGKS) serves as a coordination point for GTP. Residues 70–74 (GITID) form a G2 region. Positions 91–94 (DAPG) are G3. GTP is bound by residues 91 to 95 (DAPGH) and 153 to 156 (NKMD). The G4 stretch occupies residues 153–156 (NKMD). Residues 194–196 (SGF) are G5.

Belongs to the TRAFAC class translation factor GTPase superfamily. Classic translation factor GTPase family. EF-Tu/EF-1A subfamily.

It is found in the cytoplasm. In terms of biological role, this protein promotes the GTP-dependent binding of aminoacyl-tRNA to the A-site of ribosomes during protein biosynthesis. The protein is Elongation factor 1-alpha 1 (EFA1) of Euplotes crassus.